The following is a 487-amino-acid chain: UDP-glycosyltransferase 85A7 (487 aa).

UDP-alpha-D-glucose is bound by residues 364-366, 381-389, and 403-406; these read CPQ, HCGWNSTLE, and FSEQ.

The protein belongs to the UDP-glycosyltransferase family. In terms of tissue distribution, expressed in roots, shoots, leaves and flowers.

The chain is UDP-glycosyltransferase 85A7 (UGT85A7) from Arabidopsis thaliana (Mouse-ear cress).